We begin with the raw amino-acid sequence, 360 residues long: Xanthohumol 4-O-methyltransferase (360 aa).

D227 contacts S-adenosyl-L-methionine. H266 functions as the Proton acceptor in the catalytic mechanism.

It belongs to the class I-like SAM-binding methyltransferase superfamily. Cation-independent O-methyltransferase family. Homodimer. As to expression, highly expressed in lupulin glands. Detected in cones, male flowers and roots.

Its subcellular location is the cytoplasm. It catalyses the reaction xanthohumol + S-adenosyl-L-methionine = 4-O-methylxanthohumol + S-adenosyl-L-homocysteine + H(+). The enzyme catalyses desmethylxanthohumol + S-adenosyl-L-methionine = xanthohumol + S-adenosyl-L-homocysteine + H(+). The catalysed reaction is isoliquiritigenin + S-adenosyl-L-methionine = 2'-O-methylisoliquiritigenin + S-adenosyl-L-homocysteine + H(+). It carries out the reaction trans-resveratrol + S-adenosyl-L-methionine = 3-methoxy-4',5-dihydroxy-trans-stilbene + S-adenosyl-L-homocysteine + H(+). The protein operates within secondary metabolite biosynthesis. Inhibited by S-adenosyl homocysteine. Its function is as follows. Involved in the biosynthesis of prenylated phenolics natural products which contribute to the bitter taste of beer and display broad biological activities. O-methyltransferase with a low substrate selectivity. Methylates chalconaringenin, desmethylxanthohumol, xanthohumol, isoliquiritigenin, butein, 2',4-dihydroxychalcone, resveratrol, genistein and guaiacol. Catalyzes the biosynthesis of 2',4'-dihydroxy-4,6'-dimethoxy-3'-prenylchalcone (4-O-methylxanthohumol). The chain is Xanthohumol 4-O-methyltransferase from Humulus lupulus (European hop).